Consider the following 224-residue polypeptide: Pyridoxal 5'-phosphate synthase subunit SNO1 (224 aa).

Residue 67–69 coordinates L-glutamine; it reads GES. Cys100 (nucleophile) is an active-site residue. L-glutamine is bound by residues Arg129 and 160–161; that span reads IR. Residues His203 and Glu205 each act as charge relay system in the active site.

It belongs to the glutaminase PdxT/SNO family.

The enzyme catalyses aldehydo-D-ribose 5-phosphate + D-glyceraldehyde 3-phosphate + L-glutamine = pyridoxal 5'-phosphate + L-glutamate + phosphate + 3 H2O + H(+). The catalysed reaction is L-glutamine + H2O = L-glutamate + NH4(+). The protein operates within cofactor biosynthesis; pyridoxal 5'-phosphate biosynthesis. Functionally, catalyzes the hydrolysis of glutamine to glutamate and ammonia as part of the biosynthesis of pyridoxal 5'-phosphate. The resulting ammonia molecule is channeled to the active site of a SNZ isoform. The chain is Pyridoxal 5'-phosphate synthase subunit SNO1 (SNO1) from Saccharomyces cerevisiae (strain ATCC 204508 / S288c) (Baker's yeast).